The primary structure comprises 223 residues: Small ribosomal subunit protein uS3 (223 aa).

One can recognise a KH type-2 domain in the interval 38–106; that stretch reads IKKYLKSKLA…EVHLNIVEIR (69 aa).

The protein belongs to the universal ribosomal protein uS3 family. As to quaternary structure, part of the 30S ribosomal subunit. Forms a tight complex with proteins S10 and S14.

Its function is as follows. Binds the lower part of the 30S subunit head. Binds mRNA in the 70S ribosome, positioning it for translation. This is Small ribosomal subunit protein uS3 from Rhodospirillum rubrum (strain ATCC 11170 / ATH 1.1.1 / DSM 467 / LMG 4362 / NCIMB 8255 / S1).